Reading from the N-terminus, the 195-residue chain is Glycerol-3-phosphate acyltransferase (195 aa).

Transmembrane regions (helical) follow at residues 2-22 (LWIF…GLFI), 52-72 (YGVA…LMAY), 78-98 (WIFI…SIFM), 112-132 (VFLA…LAVI), and 145-165 (FAVA…VPLA).

This sequence belongs to the PlsY family. As to quaternary structure, probably interacts with PlsX.

It is found in the cell inner membrane. The catalysed reaction is an acyl phosphate + sn-glycerol 3-phosphate = a 1-acyl-sn-glycero-3-phosphate + phosphate. It participates in lipid metabolism; phospholipid metabolism. In terms of biological role, catalyzes the transfer of an acyl group from acyl-phosphate (acyl-PO(4)) to glycerol-3-phosphate (G3P) to form lysophosphatidic acid (LPA). This enzyme utilizes acyl-phosphate as fatty acyl donor, but not acyl-CoA or acyl-ACP. The chain is Glycerol-3-phosphate acyltransferase from Maridesulfovibrio salexigens (strain ATCC 14822 / DSM 2638 / NCIMB 8403 / VKM B-1763) (Desulfovibrio salexigens).